The chain runs to 313 residues: Methionyl-tRNA formyltransferase (313 aa).

113-116 (SLLP) serves as a coordination point for (6S)-5,6,7,8-tetrahydrofolate.

It belongs to the Fmt family.

It catalyses the reaction L-methionyl-tRNA(fMet) + (6R)-10-formyltetrahydrofolate = N-formyl-L-methionyl-tRNA(fMet) + (6S)-5,6,7,8-tetrahydrofolate + H(+). Functionally, attaches a formyl group to the free amino group of methionyl-tRNA(fMet). The formyl group appears to play a dual role in the initiator identity of N-formylmethionyl-tRNA by promoting its recognition by IF2 and preventing the misappropriation of this tRNA by the elongation apparatus. The chain is Methionyl-tRNA formyltransferase from Francisella tularensis subsp. novicida (strain U112).